Consider the following 242-residue polypeptide: 7-cyano-7-deazaguanine synthase (242 aa).

Residue 12–22 (FSGGQDSATCL) participates in ATP binding. Zn(2+) contacts are provided by Cys-200, Cys-215, Cys-218, and Cys-221.

Belongs to the QueC family. Requires Zn(2+) as cofactor.

The catalysed reaction is 7-carboxy-7-deazaguanine + NH4(+) + ATP = 7-cyano-7-deazaguanine + ADP + phosphate + H2O + H(+). The protein operates within purine metabolism; 7-cyano-7-deazaguanine biosynthesis. Functionally, catalyzes the ATP-dependent conversion of 7-carboxy-7-deazaguanine (CDG) to 7-cyano-7-deazaguanine (preQ(0)). The protein is 7-cyano-7-deazaguanine synthase of Gluconobacter oxydans (strain 621H) (Gluconobacter suboxydans).